The primary structure comprises 172 residues: 2S seed storage-like protein (172 aa).

An N-terminal signal peptide occupies residues Met-1–Gly-35. The disordered stretch occupies residues Phe-108–Lys-172. Over residues Glu-151–Arg-160 the composition is skewed to basic and acidic residues.

The protein belongs to the 2S seed storage albumins family.

The polypeptide is 2S seed storage-like protein (Picea glauca (White spruce)).